We begin with the raw amino-acid sequence, 150 residues long: Histone deacetylase complex subunit SAP18 (150 aa).

This sequence belongs to the SAP18 family. In terms of assembly, forms a complex with SIN3 and histone deacetylase. Interacts with the N-terminal residues of TRL. Interacts with BCD; in vitro and yeast cells.

Its subcellular location is the nucleus. The protein localises to the cytoplasm. Functionally, involved in the tethering of the SIN3 complex to core histone proteins. Interacts with bicoid (bcd) to repress transcription of bicoid target genes in the anterior tip of the embryo; a process known as retraction. Interacts with Trl and binds to Polycomb response elements at the bithorax complex. May contribute to the regulation of other homeotic gene expressions. The sequence is that of Histone deacetylase complex subunit SAP18 (Bin1) from Drosophila melanogaster (Fruit fly).